Here is an 872-residue protein sequence, read N- to C-terminus: Protein translocase subunit SecA (872 aa).

ATP is bound by residues Gln-87, 105–109, and Asp-500; that span reads GEGKT. Positions 855, 857, 866, and 867 each coordinate Zn(2+).

It belongs to the SecA family. As to quaternary structure, monomer and homodimer. Part of the essential Sec protein translocation apparatus which comprises SecA, SecYEG and auxiliary proteins SecDF-YajC and YidC. It depends on Zn(2+) as a cofactor.

Its subcellular location is the cell inner membrane. The protein localises to the cytoplasm. It carries out the reaction ATP + H2O + cellular proteinSide 1 = ADP + phosphate + cellular proteinSide 2.. Part of the Sec protein translocase complex. Interacts with the SecYEG preprotein conducting channel. Has a central role in coupling the hydrolysis of ATP to the transfer of proteins into and across the cell membrane, serving both as a receptor for the preprotein-SecB complex and as an ATP-driven molecular motor driving the stepwise translocation of polypeptide chains across the membrane. The polypeptide is Protein translocase subunit SecA (Anaplasma marginale (strain St. Maries)).